Consider the following 294-residue polypeptide: NAD kinase (294 aa).

Asp74 acts as the Proton acceptor in catalysis. Residues 74–75 (DG), Arg79, 149–150 (NE), Asp179, 190–195 (TGYSMS), and Ala214 contribute to the NAD(+) site.

The protein belongs to the NAD kinase family. It depends on a divalent metal cation as a cofactor.

It is found in the cytoplasm. The catalysed reaction is NAD(+) + ATP = ADP + NADP(+) + H(+). Its function is as follows. Involved in the regulation of the intracellular balance of NAD and NADP, and is a key enzyme in the biosynthesis of NADP. Catalyzes specifically the phosphorylation on 2'-hydroxyl of the adenosine moiety of NAD to yield NADP. The sequence is that of NAD kinase from Flavobacterium psychrophilum (strain ATCC 49511 / DSM 21280 / CIP 103535 / JIP02/86).